A 197-amino-acid polypeptide reads, in one-letter code: MQVLRNSGSWLLRSWAWPPTTRVVAGVPAPTIHMSAQQMQDAAAKEEVEKAETPAPAPSRSSFSIYPPIPGQESSLRWAGKKFEEIPIAHIKASYNNTQIHVVSAAHQPLARASCGTEGFRNAKKGTGIAAQTAGIAAAAKATGKGVTHVRVVVKGLGPGRLSAIKGLTMGGLEVISITDNTPIPHNGCRPRKARRL.

Basic and acidic residues predominate over residues 43–52 (AAKEEVEKAE). Residues 43 to 66 (AAKEEVEKAETPAPAPSRSSFSIY) form a disordered region.

It belongs to the universal ribosomal protein uS11 family. Component of the mitochondrial ribosome small subunit (28S) which comprises a 12S rRNA and about 30 distinct proteins.

Its subcellular location is the mitochondrion. The sequence is that of Small ribosomal subunit protein uS11m (MRPS11) from Bos taurus (Bovine).